The chain runs to 95 residues: Bombyxin F-1 (95 aa).

The signal sequence occupies residues 1-19 (MKLVVIVLLVISVSILVSA). 3 cysteine pairs are disulfide-bonded: Cys-29–Cys-82, Cys-41–Cys-95, and Cys-81–Cys-86. Positions 53–71 (NSDMVYEDSGMPELLPADT) are cleaved as a propeptide — c peptide like.

Belongs to the insulin family. As to quaternary structure, heterodimer of a B chain and an A chain linked by two disulfide bonds.

It localises to the secreted. In Bombyx mori (Silk moth), this protein is Bombyxin F-1 (BBXF1).